The primary structure comprises 137 residues: Basic phospholipase A2 homolog Cax-K49 (137 aa).

The first 16 residues, 1-16 (MRTFWIVAMLLVGVEG), serve as a signal peptide directing secretion. 7 cysteine pairs are disulfide-bonded: C42/C131, C44/C60, C59/C111, C65/C137, C66/C104, C73/C97, and C91/C102. An important for membrane-damaging activities in eukaryotes and bacteria; heparin-binding region spans residues 121 to 133 (KKYKIYPKFLCKK).

In terms of assembly, homodimer; non-covalently linked. Expressed by the venom gland.

The protein resides in the secreted. In terms of biological role, snake venom phospholipase A2 homolog that lacks enzymatic activity. Displays edema-inducing activities and may be myotoxic. A model of myotoxic mechanism has been proposed: an apo Lys49-PLA2 is activated by the entrance of a hydrophobic molecule (e.g. fatty acid) at the hydrophobic channel of the protein leading to a reorientation of a monomer. This reorientation causes a transition between 'inactive' to 'active' states, causing alignment of C-terminal and membrane-docking sites (MDoS) side-by-side and putting the membrane-disruption sites (MDiS) in the same plane, exposed to solvent and in a symmetric position for both monomers. The MDoS region stabilizes the toxin on membrane by the interaction of charged residues with phospholipid head groups. Subsequently, the MDiS region destabilizes the membrane with penetration of hydrophobic residues. This insertion causes a disorganization of the membrane, allowing an uncontrolled influx of ions (i.e. calcium and sodium), and eventually triggering irreversible intracellular alterations and cell death. This chain is Basic phospholipase A2 homolog Cax-K49, found in Crotalus atrox (Western diamondback rattlesnake).